Reading from the N-terminus, the 126-residue chain is Large ribosomal subunit protein bL12 (126 aa).

The protein belongs to the bacterial ribosomal protein bL12 family. As to quaternary structure, homodimer. Part of the ribosomal stalk of the 50S ribosomal subunit. Forms a multimeric L10(L12)X complex, where L10 forms an elongated spine to which 2 to 4 L12 dimers bind in a sequential fashion. Binds GTP-bound translation factors.

Forms part of the ribosomal stalk which helps the ribosome interact with GTP-bound translation factors. Is thus essential for accurate translation. The sequence is that of Large ribosomal subunit protein bL12 from Corynebacterium diphtheriae (strain ATCC 700971 / NCTC 13129 / Biotype gravis).